The primary structure comprises 829 residues: Periplasmic nitrate reductase (829 aa).

The segment at residues 1 to 31 (MKLSRRDFMKANAVAAAAAAAGLTIPTVARA) is a signal peptide (tat-type signal). In terms of domain architecture, 4Fe-4S Mo/W bis-MGD-type spans 40–96 (ITWDKAPCRFCGTGCGVLVGTQNGRIVASQGDPDAPVNRGLNCIKGYFLPKIMYGKD). The [4Fe-4S] cluster site is built by Cys47, Cys50, Cys54, and Cys82. Mo-bis(molybdopterin guanine dinucleotide) contacts are provided by residues Lys84, Gln151, Asn176, Cys180, 213–220 (WGSNMAEM), 263–265 (QSD), Met373, Gln377, Asn483, 509–510 (SD), Lys532, Asp559, and 719–728 (TGRVLEHWHT). Phe795 lines the substrate pocket. The Mo-bis(molybdopterin guanine dinucleotide) site is built by Asn803 and Lys820.

This sequence belongs to the prokaryotic molybdopterin-containing oxidoreductase family. NasA/NapA/NarB subfamily. Component of the periplasmic nitrate reductase NapAB complex composed of NapA and NapB. Requires [4Fe-4S] cluster as cofactor. It depends on Mo-bis(molybdopterin guanine dinucleotide) as a cofactor. Post-translationally, predicted to be exported by the Tat system. The position of the signal peptide cleavage has not been experimentally proven.

The protein localises to the periplasm. The enzyme catalyses 2 Fe(II)-[cytochrome] + nitrate + 2 H(+) = 2 Fe(III)-[cytochrome] + nitrite + H2O. Catalytic subunit of the periplasmic nitrate reductase complex NapAB. Receives electrons from NapB and catalyzes the reduction of nitrate to nitrite. The chain is Periplasmic nitrate reductase from Edwardsiella ictaluri (strain 93-146).